Consider the following 207-residue polypeptide: 8-oxoguanine DNA glycosylase/AP lyase (207 aa).

Residues Lys128 and Asp146 contribute to the active site.

It belongs to the type-2 OGG1 family.

It catalyses the reaction 2'-deoxyribonucleotide-(2'-deoxyribose 5'-phosphate)-2'-deoxyribonucleotide-DNA = a 3'-end 2'-deoxyribonucleotide-(2,3-dehydro-2,3-deoxyribose 5'-phosphate)-DNA + a 5'-end 5'-phospho-2'-deoxyribonucleoside-DNA + H(+). In terms of biological role, catalyzes the excision of an oxidatively damaged form of guanine (7,8-dihydro-8-oxoguanine = 8-oxoG) from DNA. Also cleaves the DNA backbone at apurinic/apyrimidinic sites (AP sites). The sequence is that of 8-oxoguanine DNA glycosylase/AP lyase from Saccharolobus islandicus (strain Y.N.15.51 / Yellowstone #2) (Sulfolobus islandicus).